Here is a 150-residue protein sequence, read N- to C-terminus: D-aminoacyl-tRNA deacylase (150 aa).

Residues 138–139 (GP) carry the Gly-cisPro motif, important for rejection of L-amino acids motif.

This sequence belongs to the DTD family. In terms of assembly, homodimer.

The protein resides in the cytoplasm. The enzyme catalyses glycyl-tRNA(Ala) + H2O = tRNA(Ala) + glycine + H(+). It carries out the reaction a D-aminoacyl-tRNA + H2O = a tRNA + a D-alpha-amino acid + H(+). Its function is as follows. An aminoacyl-tRNA editing enzyme that deacylates mischarged D-aminoacyl-tRNAs. Also deacylates mischarged glycyl-tRNA(Ala), protecting cells against glycine mischarging by AlaRS. Acts via tRNA-based rather than protein-based catalysis; rejects L-amino acids rather than detecting D-amino acids in the active site. By recycling D-aminoacyl-tRNA to D-amino acids and free tRNA molecules, this enzyme counteracts the toxicity associated with the formation of D-aminoacyl-tRNA entities in vivo and helps enforce protein L-homochirality. The polypeptide is D-aminoacyl-tRNA deacylase (Azobacteroides pseudotrichonymphae genomovar. CFP2).